The sequence spans 274 residues: Large ribosomal subunit protein uL2cz/uL2cy (274 aa).

Residues 224-252 (NPVDHPHGGGEGRAPIGRKKPVTPWGYPA) form a disordered region.

The protein belongs to the universal ribosomal protein uL2 family. In terms of assembly, part of the 50S ribosomal subunit.

The protein resides in the plastid. It is found in the chloroplast. The chain is Large ribosomal subunit protein uL2cz/uL2cy (rpl2-A) from Capsella bursa-pastoris (Shepherd's purse).